Here is a 428-residue protein sequence, read N- to C-terminus: Chaperone SurA (428 aa).

The signal sequence occupies residues 1–20 (MKNWKTLLLGIAMIANTSFA). 2 PpiC domains span residues 171-272 (STEL…KVND) and 282-382 (VTEV…ELLD).

It localises to the periplasm. The enzyme catalyses [protein]-peptidylproline (omega=180) = [protein]-peptidylproline (omega=0). In terms of biological role, chaperone involved in the correct folding and assembly of outer membrane proteins. Recognizes specific patterns of aromatic residues and the orientation of their side chains, which are found more frequently in integral outer membrane proteins. May act in both early periplasmic and late outer membrane-associated steps of protein maturation. The chain is Chaperone SurA from Salmonella paratyphi A (strain ATCC 9150 / SARB42).